Reading from the N-terminus, the 274-residue chain is 2,3,4,5-tetrahydropyridine-2,6-dicarboxylate N-succinyltransferase (274 aa).

Substrate-binding residues include Arg-104 and Asp-141.

The protein belongs to the transferase hexapeptide repeat family. As to quaternary structure, homotrimer.

Its subcellular location is the cytoplasm. The catalysed reaction is (S)-2,3,4,5-tetrahydrodipicolinate + succinyl-CoA + H2O = (S)-2-succinylamino-6-oxoheptanedioate + CoA. The protein operates within amino-acid biosynthesis; L-lysine biosynthesis via DAP pathway; LL-2,6-diaminopimelate from (S)-tetrahydrodipicolinate (succinylase route): step 1/3. In Shewanella loihica (strain ATCC BAA-1088 / PV-4), this protein is 2,3,4,5-tetrahydropyridine-2,6-dicarboxylate N-succinyltransferase.